A 77-amino-acid chain; its full sequence is Translation initiation factor IF-1, chloroplastic (77 aa).

One can recognise an S1-like domain in the interval M1–R71.

It belongs to the IF-1 family. Component of the 30S ribosomal translation pre-initiation complex which assembles on the 30S ribosome in the order IF-2 and IF-3, IF-1 and N-formylmethionyl-tRNA(fMet); mRNA recruitment can occur at any time during PIC assembly.

It localises to the plastid. The protein localises to the chloroplast. Functionally, one of the essential components for the initiation of protein synthesis. Stabilizes the binding of IF-2 and IF-3 on the 30S subunit to which N-formylmethionyl-tRNA(fMet) subsequently binds. Helps modulate mRNA selection, yielding the 30S pre-initiation complex (PIC). Upon addition of the 50S ribosomal subunit IF-1, IF-2 and IF-3 are released leaving the mature 70S translation initiation complex. The polypeptide is Translation initiation factor IF-1, chloroplastic (Calycanthus floridus var. glaucus (Eastern sweetshrub)).